The chain runs to 209 residues: Protein GrpE (209 aa).

Basic and acidic residues-rich tracts occupy residues methionine 1 to serine 16 and lysine 34 to lysine 44. Residues methionine 1 to glutamate 61 are disordered.

The protein belongs to the GrpE family. In terms of assembly, homodimer.

It localises to the cytoplasm. Participates actively in the response to hyperosmotic and heat shock by preventing the aggregation of stress-denatured proteins, in association with DnaK and GrpE. It is the nucleotide exchange factor for DnaK and may function as a thermosensor. Unfolded proteins bind initially to DnaJ; upon interaction with the DnaJ-bound protein, DnaK hydrolyzes its bound ATP, resulting in the formation of a stable complex. GrpE releases ADP from DnaK; ATP binding to DnaK triggers the release of the substrate protein, thus completing the reaction cycle. Several rounds of ATP-dependent interactions between DnaJ, DnaK and GrpE are required for fully efficient folding. The polypeptide is Protein GrpE (Methanosarcina acetivorans (strain ATCC 35395 / DSM 2834 / JCM 12185 / C2A)).